Reading from the N-terminus, the 282-residue chain is F-actin-capping protein subunit alpha (282 aa).

Belongs to the F-actin-capping protein alpha subunit family. Component of the F-actin capping complex, composed of a heterodimer of an alpha and a beta subunit.

The protein localises to the cytoplasm. Its subcellular location is the cytoskeleton. Functionally, F-actin-capping proteins bind in a Ca(2+)-independent manner to the fast growing ends of actin filaments (barbed end) thereby blocking the exchange of subunits at these ends. Unlike other capping proteins (such as gelsolin and severin), these proteins do not sever actin filaments. The chain is F-actin-capping protein subunit alpha (cap-1) from Caenorhabditis elegans.